A 128-amino-acid polypeptide reads, in one-letter code: Glycine cleavage system H protein (128 aa).

The Lipoyl-binding domain maps to 24-106 (VATVGITAFA…YNNGWLLKIK (83 aa)). Lys65 carries the N6-lipoyllysine modification.

Belongs to the GcvH family. In terms of assembly, the glycine cleavage system is composed of four proteins: P, T, L and H. (R)-lipoate serves as cofactor.

In terms of biological role, the glycine cleavage system catalyzes the degradation of glycine. The H protein shuttles the methylamine group of glycine from the P protein to the T protein. The protein is Glycine cleavage system H protein of Acaryochloris marina (strain MBIC 11017).